The primary structure comprises 166 residues: Probable DHNTP pyrophosphohydrolase (166 aa).

One can recognise a Nudix hydrolase domain in the interval 42-166 (DLQLSASALV…FKKYYRYKNI (125 aa)). The short motif at 73–94 (GHVELKESPLDTAIREFHEETG) is the Nudix box element. Residues Glu-88 and Glu-92 each coordinate Mg(2+).

It belongs to the Nudix hydrolase family. As to quaternary structure, monomer. The cofactor is Mg(2+).

The protein operates within cofactor biosynthesis; tetrahydrofolate biosynthesis; 2-amino-4-hydroxy-6-hydroxymethyl-7,8-dihydropteridine diphosphate from 7,8-dihydroneopterin triphosphate: step 1/4. Functionally, probably mediates the removal of pyrophosphate from dihydroneopterin triphosphate (DHNTP), a possible step in the pterin branch of the folate synthesis pathway. The chain is Probable DHNTP pyrophosphohydrolase (folQ) from Lactococcus lactis subsp. cremoris (strain MG1363).